We begin with the raw amino-acid sequence, 180 residues long: Large ribosomal subunit protein uL5 (180 aa).

It belongs to the universal ribosomal protein uL5 family. As to quaternary structure, part of the 50S ribosomal subunit; part of the 5S rRNA/L5/L18/L25 subcomplex. Contacts the 5S rRNA and the P site tRNA. Forms a bridge to the 30S subunit in the 70S ribosome.

Its function is as follows. This is one of the proteins that bind and probably mediate the attachment of the 5S RNA into the large ribosomal subunit, where it forms part of the central protuberance. In the 70S ribosome it contacts protein S13 of the 30S subunit (bridge B1b), connecting the 2 subunits; this bridge is implicated in subunit movement. Contacts the P site tRNA; the 5S rRNA and some of its associated proteins might help stabilize positioning of ribosome-bound tRNAs. This Chlamydia caviae (strain ATCC VR-813 / DSM 19441 / 03DC25 / GPIC) (Chlamydophila caviae) protein is Large ribosomal subunit protein uL5.